The chain runs to 1394 residues: DNA-directed RNA polymerase subunit beta' (1394 aa).

Zn(2+) is bound by residues C71, C73, C86, and C89. Mg(2+) contacts are provided by D462, D464, and D466. C810, C883, C890, and C893 together coordinate Zn(2+).

Belongs to the RNA polymerase beta' chain family. In terms of assembly, the RNAP catalytic core consists of 2 alpha, 1 beta, 1 beta' and 1 omega subunit. When a sigma factor is associated with the core the holoenzyme is formed, which can initiate transcription. Mg(2+) serves as cofactor. Zn(2+) is required as a cofactor.

It carries out the reaction RNA(n) + a ribonucleoside 5'-triphosphate = RNA(n+1) + diphosphate. Its function is as follows. DNA-dependent RNA polymerase catalyzes the transcription of DNA into RNA using the four ribonucleoside triphosphates as substrates. The chain is DNA-directed RNA polymerase subunit beta' from Beijerinckia indica subsp. indica (strain ATCC 9039 / DSM 1715 / NCIMB 8712).